A 122-amino-acid chain; its full sequence is Acidic phospholipase A2 (122 aa).

7 disulfide bridges follow: Cys26/Cys115, Cys28/Cys44, Cys43/Cys95, Cys49/Cys122, Cys50/Cys88, Cys57/Cys81, and Cys75/Cys86. Ca(2+)-binding residues include Tyr27, Gly29, and Gly31. The active site involves His47. Position 48 (Asp48) interacts with Ca(2+). Asp89 is an active-site residue.

The protein belongs to the phospholipase A2 family. Group II subfamily. D49 sub-subfamily. Ca(2+) is required as a cofactor. Contains 7 disulfide bonds. As to expression, expressed by the venom gland.

It localises to the secreted. It catalyses the reaction a 1,2-diacyl-sn-glycero-3-phosphocholine + H2O = a 1-acyl-sn-glycero-3-phosphocholine + a fatty acid + H(+). Functionally, snake venom phospholipase A2 (PLA2) that displays low systemic toxicity and causes severe symptoms only at very high concentrations (15 mg/kg). Has neither coagulant nor anticoagulant activity. PLA2 catalyzes the calcium-dependent hydrolysis of the 2-acyl groups in 3-sn-phosphoglycerides. This chain is Acidic phospholipase A2, found in Bothrops ammodytoides (Yararanata).